The chain runs to 834 residues: DNA gyrase subunit A (834 aa).

The Topo IIA-type catalytic domain maps to 53–520; it reads LPDVRDGLKP…NDTEIDEEDL (468 aa). Y141 acts as the O-(5'-phospho-DNA)-tyrosine intermediate in catalysis. A GyrA-box motif is present at residues 547–553; that stretch reads QGRGGVG.

It belongs to the type II topoisomerase GyrA/ParC subunit family. In terms of assembly, heterotetramer, composed of two GyrA and two GyrB chains. In the heterotetramer, GyrA contains the active site tyrosine that forms a transient covalent intermediate with DNA, while GyrB binds cofactors and catalyzes ATP hydrolysis.

The protein resides in the cytoplasm. It carries out the reaction ATP-dependent breakage, passage and rejoining of double-stranded DNA.. A type II topoisomerase that negatively supercoils closed circular double-stranded (ds) DNA in an ATP-dependent manner to modulate DNA topology and maintain chromosomes in an underwound state. Negative supercoiling favors strand separation, and DNA replication, transcription, recombination and repair, all of which involve strand separation. Also able to catalyze the interconversion of other topological isomers of dsDNA rings, including catenanes and knotted rings. Type II topoisomerases break and join 2 DNA strands simultaneously in an ATP-dependent manner. In Brachyspira hyodysenteriae (strain ATCC 49526 / WA1), this protein is DNA gyrase subunit A.